The sequence spans 249 residues: NADH-quinone oxidoreductase subunit C (249 aa).

A disordered region spans residues 1–29 (MTENQTTPDPGEPGSSADRPGGLVPTGDS).

The protein belongs to the complex I 30 kDa subunit family. NDH-1 is composed of 14 different subunits. Subunits NuoB, C, D, E, F, and G constitute the peripheral sector of the complex.

The protein resides in the cell membrane. It catalyses the reaction a quinone + NADH + 5 H(+)(in) = a quinol + NAD(+) + 4 H(+)(out). In terms of biological role, NDH-1 shuttles electrons from NADH, via FMN and iron-sulfur (Fe-S) centers, to quinones in the respiratory chain. The immediate electron acceptor for the enzyme in this species is believed to be a menaquinone. Couples the redox reaction to proton translocation (for every two electrons transferred, four hydrogen ions are translocated across the cytoplasmic membrane), and thus conserves the redox energy in a proton gradient. The polypeptide is NADH-quinone oxidoreductase subunit C (Saccharopolyspora erythraea (strain ATCC 11635 / DSM 40517 / JCM 4748 / NBRC 13426 / NCIMB 8594 / NRRL 2338)).